The primary structure comprises 183 residues: Capsid protein (183 aa).

The tract at residues 136 to 183 (NAPILSTLPETTVVRRRGRSPRRRTPSPRRRRSQSPRRRRTQSRESQC) is disordered. The span at 149–176 (VRRRGRSPRRRTPSPRRRRSQSPRRRRT) shows a compositional bias: basic residues. Residues Ser-155, Ser-162, and Ser-170 each carry the phosphoserine; by host modification. Residues 155–161 (SPRRRTP) form a 1; half-length repeat. The tract at residues 155-177 (SPRRRTPSPRRRRSQSPRRRRTQ) is 3 X 8 AA repeats of S-P-R-R-R-[PR]-[ST]-Q. The Bipartite nuclear localization signal signature appears at 158–175 (RRTPSPRRRRSQSPRRRR). 2 consecutive repeat copies span residues 162–169 (SPRRRRSQ) and 170–177 (SPRRRRTQ). Residues 177-183 (QSRESQC) form an RNA binding region.

This sequence belongs to the orthohepadnavirus core antigen family. As to quaternary structure, homodimerizes, then multimerizes. Interacts with cytosol exposed regions of viral L glycoprotein present in the reticulum-to-Golgi compartment. Interacts with human FLNB. Phosphorylated form interacts with host importin alpha; this interaction depends on the exposure of the NLS, which itself depends upon genome maturation and/or phosphorylation of the capsid protein. Interacts with host NUP153. Post-translationally, phosphorylated by host SRPK1, SRPK2, and maybe protein kinase C or GAPDH. Phosphorylation is critical for pregenomic RNA packaging. Protein kinase C phosphorylation is stimulated by HBx protein and may play a role in transport of the viral genome to the nucleus at the late step during the viral replication cycle.

It localises to the virion. It is found in the host cytoplasm. Functionally, self assembles to form an icosahedral capsid. Most capsids appear to be large particles with an icosahedral symmetry of T=4 and consist of 240 copies of capsid protein, though a fraction forms smaller T=3 particles consisting of 180 capsid proteins. Entering capsids are transported along microtubules to the nucleus. Phosphorylation of the capsid is thought to induce exposure of nuclear localization signal in the C-terminal portion of the capsid protein that allows binding to the nuclear pore complex via the importin (karyopherin-) alpha and beta. Capsids are imported in intact form through the nuclear pore into the nuclear basket, where it probably binds NUP153. Only capsids that contain the mature viral genome can release the viral DNA and capsid protein into the nucleoplasm. Immature capsids get stuck in the basket. Capsids encapsulate the pre-genomic RNA and the P protein. Pre-genomic RNA is reverse-transcribed into DNA while the capsid is still in the cytoplasm. The capsid can then either be directed to the nucleus, providing more genomes for transcription, or bud through the endoplasmic reticulum to provide new virions. The sequence is that of Capsid protein from Hepatitis B virus genotype D (isolate France/alpha1/1989) (HBV-D).